A 349-amino-acid polypeptide reads, in one-letter code: Cobalt-precorrin-5B C(1)-methyltransferase (349 aa).

It belongs to the CbiD family.

It carries out the reaction Co-precorrin-5B + S-adenosyl-L-methionine = Co-precorrin-6A + S-adenosyl-L-homocysteine. It functions in the pathway cofactor biosynthesis; adenosylcobalamin biosynthesis; cob(II)yrinate a,c-diamide from sirohydrochlorin (anaerobic route): step 6/10. Functionally, catalyzes the methylation of C-1 in cobalt-precorrin-5B to form cobalt-precorrin-6A. In Saccharolobus islandicus (strain M.16.27) (Sulfolobus islandicus), this protein is Cobalt-precorrin-5B C(1)-methyltransferase.